The sequence spans 459 residues: tRNA modification GTPase MnmE (459 aa).

(6S)-5-formyl-5,6,7,8-tetrahydrofolate contacts are provided by arginine 30, glutamate 93, and lysine 132. The TrmE-type G domain maps to 226–381; the sequence is GVTMAIVGKP…LEEKILESVK (156 aa). A K(+)-binding site is contributed by asparagine 236. GTP is bound by residues 236-241, 255-261, and 280-283; these read NVGKST, TDIPGTT, and DTAG. Serine 240 contributes to the Mg(2+) binding site. K(+) contacts are provided by threonine 255, isoleucine 257, and threonine 260. Threonine 261 serves as a coordination point for Mg(2+). Residue lysine 459 coordinates (6S)-5-formyl-5,6,7,8-tetrahydrofolate.

This sequence belongs to the TRAFAC class TrmE-Era-EngA-EngB-Septin-like GTPase superfamily. TrmE GTPase family. Homodimer. Heterotetramer of two MnmE and two MnmG subunits. K(+) serves as cofactor.

The protein localises to the cytoplasm. Exhibits a very high intrinsic GTPase hydrolysis rate. Involved in the addition of a carboxymethylaminomethyl (cmnm) group at the wobble position (U34) of certain tRNAs, forming tRNA-cmnm(5)s(2)U34. The polypeptide is tRNA modification GTPase MnmE (Fervidobacterium nodosum (strain ATCC 35602 / DSM 5306 / Rt17-B1)).